Consider the following 208-residue polypeptide: Large ribosomal subunit protein bL25 (208 aa).

The tract at residues Met1 to Arg21 is disordered.

Belongs to the bacterial ribosomal protein bL25 family. CTC subfamily. Part of the 50S ribosomal subunit; part of the 5S rRNA/L5/L18/L25 subcomplex. Contacts the 5S rRNA. Binds to the 5S rRNA independently of L5 and L18.

Functionally, this is one of the proteins that binds to the 5S RNA in the ribosome where it forms part of the central protuberance. The chain is Large ribosomal subunit protein bL25 from Hahella chejuensis (strain KCTC 2396).